The following is a 134-amino-acid chain: Profilin-3 (134 aa).

C13 and C118 are disulfide-bonded. The Involved in PIP2 interaction motif lies at A84 to T100. T114 carries the phosphothreonine modification.

Belongs to the profilin family. Occurs in many kinds of cells as a complex with monomeric actin in a 1:1 ratio. Phosphorylated by MAP kinases.

Its subcellular location is the cytoplasm. The protein resides in the cytoskeleton. In terms of biological role, binds to actin and affects the structure of the cytoskeleton. At high concentrations, profilin prevents the polymerization of actin, whereas it enhances it at low concentrations. The chain is Profilin-3 from Olea europaea (Common olive).